The following is a 354-amino-acid chain: UDP-3-O-acylglucosamine N-acyltransferase (354 aa).

His257 (proton acceptor) is an active-site residue. A disordered region spans residues 335–354 (AQQVSKSKLRGRNPGGKQND).

Belongs to the transferase hexapeptide repeat family. LpxD subfamily. In terms of assembly, homotrimer.

It catalyses the reaction a UDP-3-O-[(3R)-3-hydroxyacyl]-alpha-D-glucosamine + a (3R)-hydroxyacyl-[ACP] = a UDP-2-N,3-O-bis[(3R)-3-hydroxyacyl]-alpha-D-glucosamine + holo-[ACP] + H(+). Its pathway is bacterial outer membrane biogenesis; LPS lipid A biosynthesis. Its function is as follows. Catalyzes the N-acylation of UDP-3-O-acylglucosamine using 3-hydroxyacyl-ACP as the acyl donor. Is involved in the biosynthesis of lipid A, a phosphorylated glycolipid that anchors the lipopolysaccharide to the outer membrane of the cell. In Rhizobium etli (strain ATCC 51251 / DSM 11541 / JCM 21823 / NBRC 15573 / CFN 42), this protein is UDP-3-O-acylglucosamine N-acyltransferase.